The following is an 80-amino-acid chain: uncharacterized protein (80 aa).

This is an uncharacterized protein from Homo sapiens (Human).